The sequence spans 650 residues: Acetyl-coenzyme A synthetase (650 aa).

Residues 191-194, Thr-311, and Asn-335 each bind CoA; that span reads RGGR. ATP contacts are provided by residues 387–389, 411–416, Asp-500, and Arg-515; these read GEP and DTWWQT. Ser-523 lines the CoA pocket. Residue Arg-526 coordinates ATP. Positions 537, 539, and 542 each coordinate Mg(2+). Position 584 (Arg-584) interacts with CoA. Lys-609 carries the post-translational modification N6-acetyllysine.

Belongs to the ATP-dependent AMP-binding enzyme family. Requires Mg(2+) as cofactor. Acetylated. Deacetylation by the SIR2-homolog deacetylase activates the enzyme.

The catalysed reaction is acetate + ATP + CoA = acetyl-CoA + AMP + diphosphate. In terms of biological role, catalyzes the conversion of acetate into acetyl-CoA (AcCoA), an essential intermediate at the junction of anabolic and catabolic pathways. AcsA undergoes a two-step reaction. In the first half reaction, AcsA combines acetate with ATP to form acetyl-adenylate (AcAMP) intermediate. In the second half reaction, it can then transfer the acetyl group from AcAMP to the sulfhydryl group of CoA, forming the product AcCoA. The sequence is that of Acetyl-coenzyme A synthetase from Shewanella sp. (strain ANA-3).